The primary structure comprises 103 residues: MERVRDLASEKAAVIFTKSSCCMCHSIKTLFYELGASPAIHELDKDPQGPDMERALFRVFGSNPAVPAVFVGGRYVGSAKDVISFHVDGSLKQMLKASNAIWL.

Residues 1–102 (MERVRDLASE…QMLKASNAIW (102 aa)) form the Glutaredoxin domain. Cys21 and Cys24 are oxidised to a cystine.

Belongs to the glutaredoxin family. CC-type subfamily.

The protein localises to the cytoplasm. Its function is as follows. Has a glutathione-disulfide oxidoreductase activity in the presence of NADPH and glutathione reductase. Reduces low molecular weight disulfides and proteins. In Arabidopsis thaliana (Mouse-ear cress), this protein is Putative glutaredoxin-C12 (GRXC12).